Consider the following 472-residue polypeptide: FAD-dependent monooxygenase ltmM (472 aa).

A helical membrane pass occupies residues 7-27 (VIIVGGSVAGLSLAHCLEKIG). Residues glutamate 34, glycine 48, and arginine 107 each contribute to the FAD site. The N-linked (GlcNAc...) asparagine glycan is linked to asparagine 186. FAD contacts are provided by aspartate 306 and alanine 319. Residues 450 to 470 (IVYALYLVAAAAFILYCLSSL) traverse the membrane as a helical segment.

The protein belongs to the paxM FAD-dependent monooxygenase family. Requires FAD as cofactor.

It is found in the membrane. It participates in secondary metabolite biosynthesis. In terms of biological role, FAD-dependent monooxygenase; part of the gene cluster that mediates the biosynthesis of lolitrems, indole-diterpene mycotoxins that are potent tremorgens in mammals, and are synthesized by clavicipitaceous fungal endophytes in association with their grass hosts. The geranylgeranyl diphosphate (GGPP) synthase ltmG is proposed to catalyze the first step in lolitremB biosynthesis. LtmG catalyzes a series of iterative condensations of isopentenyl diphosphate (IPP) with dimethylallyl diphosphate (DMAPP), geranyl diphosphate (GPP), and farnesyl diphosphate (FPP), to form GGPP. GGPP then condenses with indole-3-glycerol phosphate to form 3-geranylgeranylindole, an acyclic intermediate, to be incorporated into paxilline. Either ltmG or ltmC could be responsible for this step, as both are putative prenyl transferases. The FAD-dependent monooxygenase ltmM then catalyzes the epoxidation of the two terminal alkenes of the geranylgeranyl moiety, which is subsequently cyclized by ltmB, to paspaline. The cytochrome P450 monooxygenases ltmQ and ltmP can sequentially oxidize paspaline to terpendole E and terpendole F. Alternatively, ltmP converts paspaline to an intermediate which is oxidized by ltmQ to terpendole F. LtmF, ltmK, ltmE and ltmJ appear to be unique to the epichloe endophytes. The prenyltransferase ltmF is involved in the 27-hydroxyl-O-prenylation. The cytochrome P450 monooxygenase ltmK is required for the oxidative acetal ring formation. The multi-functional prenyltransferase ltmE is required for C20- and C21-prenylations of the indole ring of paspalanes and acts together with the cytochrome P450 monooxygenase ltmJ to yield lolitremanes by multiple oxidations and ring closures. The stereoisomer pairs of lolitriol and lolitrem N or lolitrem B and lolitrem F may be attributed to variations in the way in which ring closure can occur under the action of ltmJ. While the major product of this pathway is lolitrem B, the prenyl transferases and cytochrome P450 monooxygenases identified in this pathway have a remarkable versatility in their regio- and stereo-specificities to generate a diverse range of metabolites that are products of a metabolic grid rather than a linear pathway. The polypeptide is FAD-dependent monooxygenase ltmM (ltmM) (Epichloe festucae var. lolii (Neotyphodium lolii)).